The following is a 370-amino-acid chain: uncharacterized protein (370 aa).

The next 10 helical transmembrane spans lie at 6 to 26 (AVVF…CLGN), 49 to 69 (IGIV…VAPF), 79 to 99 (SFAN…GEMA), 111 to 131 (FLGT…LGII), 143 to 163 (ILIG…CAGF), 167 to 187 (MIGK…FGLW), 206 to 226 (MVAI…IVLI), 236 to 256 (IQTT…TAFI), 307 to 327 (VAFA…VAGM), and 333 to 353 (AAMI…AAWM).

This sequence belongs to the EutH family.

It is found in the cell membrane. This is an uncharacterized protein from Bacillus subtilis (strain 168).